Consider the following 277-residue polypeptide: Urease accessory protein UreD (277 aa).

Belongs to the UreD family. In terms of assembly, ureD, UreF and UreG form a complex that acts as a GTP-hydrolysis-dependent molecular chaperone, activating the urease apoprotein by helping to assemble the nickel containing metallocenter of UreC. The UreE protein probably delivers the nickel.

Its subcellular location is the cytoplasm. Required for maturation of urease via the functional incorporation of the urease nickel metallocenter. This is Urease accessory protein UreD from Pseudomonas entomophila (strain L48).